A 477-amino-acid polypeptide reads, in one-letter code: Cobyric acid synthase (477 aa).

In terms of domain architecture, GATase cobBQ-type spans 248–432; that stretch reads GLHIACPMLS…LHGLFSGDGF (185 aa). Residue Cys-330 is the Nucleophile of the active site. Residue His-424 is part of the active site.

Belongs to the CobB/CobQ family. CobQ subfamily.

Its pathway is cofactor biosynthesis; adenosylcobalamin biosynthesis. Functionally, catalyzes amidations at positions B, D, E, and G on adenosylcobyrinic A,C-diamide. NH(2) groups are provided by glutamine, and one molecule of ATP is hydrogenolyzed for each amidation. The protein is Cobyric acid synthase of Paracoccus denitrificans (strain Pd 1222).